The sequence spans 147 residues: Large ribosomal subunit protein bL9 (147 aa).

It belongs to the bacterial ribosomal protein bL9 family.

In terms of biological role, binds to the 23S rRNA. The chain is Large ribosomal subunit protein bL9 from Clostridium kluyveri (strain NBRC 12016).